A 600-amino-acid polypeptide reads, in one-letter code: Long-chain-fatty-acid--CoA ligase FadD15 (600 aa).

This sequence belongs to the ATP-dependent AMP-binding enzyme family.

The catalysed reaction is a long-chain fatty acid + ATP + CoA = a long-chain fatty acyl-CoA + AMP + diphosphate. Its pathway is lipid metabolism; fatty acid biosynthesis. Catalyzes the activation of long-chain fatty acids as acyl-coenzyme A (acyl-CoA), which are then transferred to the multifunctional polyketide synthase (PKS) type III for further chain extension. This Mycobacterium bovis (strain ATCC BAA-935 / AF2122/97) protein is Long-chain-fatty-acid--CoA ligase FadD15 (fadD15).